Reading from the N-terminus, the 778-residue chain is Endonuclease MutS2 (778 aa).

Gly-328–Thr-335 provides a ligand contact to ATP. Positions Leu-703–Gly-778 constitute a Smr domain.

The protein belongs to the DNA mismatch repair MutS family. MutS2 subfamily. Homodimer. Binds to stalled ribosomes, contacting rRNA.

In terms of biological role, endonuclease that is involved in the suppression of homologous recombination and thus may have a key role in the control of bacterial genetic diversity. Functionally, acts as a ribosome collision sensor, splitting the ribosome into its 2 subunits. Detects stalled/collided 70S ribosomes which it binds and splits by an ATP-hydrolysis driven conformational change. Acts upstream of the ribosome quality control system (RQC), a ribosome-associated complex that mediates the extraction of incompletely synthesized nascent chains from stalled ribosomes and their subsequent degradation. Probably generates substrates for RQC. This is Endonuclease MutS2 from Streptococcus equi subsp. equi (strain 4047).